A 1757-amino-acid polypeptide reads, in one-letter code: Serine/threonine-protein kinase WNK3 (1757 aa).

Residues 1–25 (MATDSGEPASTEDSEKPDGVSFENR) form a disordered region. Phosphoserine is present on serine 62. A compositionally biased stretch (basic and acidic residues) spans 66–82 (TEDDKVAESSRRDERKA). A disordered region spans residues 66–85 (TEDDKVAESSRRDERKAATN). In terms of domain architecture, Protein kinase spans 146–404 (LKFDIELGRG…IKDLLNHAFF (259 aa)). ATP-binding positions include 226-229 (TELM) and lysine 276. Residue aspartate 293 is the Proton acceptor of the active site. Serine 303 and serine 307 each carry phosphoserine; by autocatalysis. Positions 536–546 (EYEETEVDQHV) are interaction with KLHL3. At threonine 540 the chain carries Phosphothreonine. 3 stretches are compositionally biased toward polar residues: residues 551-570 (LQGK…SSEP), 578-604 (SDTS…KLTQ), and 674-689 (SVKE…SGNG). 2 disordered regions span residues 551–604 (LQGK…KLTQ) and 674–705 (SVKE…PRPE). Phosphoserine is present on serine 1039. The span at 1404–1422 (VATEKNVTSTTEVSVQSGS) shows a compositional bias: polar residues. 3 disordered regions span residues 1404 to 1440 (VATE…QTCT), 1479 to 1498 (SLFY…EIED), and 1536 to 1574 (ATKD…MTHS). A compositionally biased stretch (low complexity) spans 1479-1491 (SLFYSPSSPMSSD). Residues serine 1550 and serine 1553 each carry the phosphoserine modification. The span at 1555-1566 (RRPRSFKSKLRS) shows a compositional bias: basic residues. Serine 1595 is modified (phosphoserine). 2 disordered regions span residues 1621–1650 (HFPS…CEST) and 1734–1757 (PGMN…PGPK). Residues 1624 to 1637 (SKPSLNQLKQSQQK) are compositionally biased toward low complexity. Residues 1641-1650 (ENWNKSCEST) are compositionally biased toward polar residues. Residues 1742–1757 (PAPPVQNPASIPPGPK) are compositionally biased toward pro residues.

This sequence belongs to the protein kinase superfamily. Ser/Thr protein kinase family. WNK subfamily. In terms of assembly, interacts with WNK1 and WNK4. Mg(2+) serves as cofactor. In terms of processing, autophosphorylated at Ser-303 and Ser-307, promoting its activity. Phosphorylation at Thr-540 prevents interaction with KLHL3 and subsequent ubiquitination and degradation by the BCR(KLHL3) complex. Post-translationally, ubiquitinated by the BCR(KLHL2) complex, leading to its degradation. Ubiquitinated by the BCR(KLHL3) complex, leading to its degradation. In terms of tissue distribution, expressed in pancreatic duct.

The protein resides in the cytoplasm. It carries out the reaction L-seryl-[protein] + ATP = O-phospho-L-seryl-[protein] + ADP + H(+). It catalyses the reaction L-threonyl-[protein] + ATP = O-phospho-L-threonyl-[protein] + ADP + H(+). Its activity is regulated as follows. Activated in response to hyperosmotic stress: cell shrinkage promotes formation of a membraneless compartment that concentrates WNK3 with its substrates, OXSR1/OSR1 and STK39/SPAK. Activation requires autophosphorylation of Ser-307 and, to a lower extent, Ser-303. Autophosphorylation and subsequent activation is inhibited by increases in intracellular ionic strength: Cl(-) potently inhibits WNK3 kinase activity via direct binding. Also inhibited by K(+) ions. Kinase activity is inhibited by WNK4. Serine/threonine-protein kinase component of the WNK3-SPAK/OSR1 kinase cascade, which plays an important role in the regulation of electrolyte homeostasis and regulatory volume increase in response to hyperosmotic stress. WNK3 mediates regulatory volume increase in response to hyperosmotic stress by acting as a molecular crowding sensor, which senses cell shrinkage and mediates formation of a membraneless compartment by undergoing liquid-liquid phase separation. The membraneless compartment concentrates WNK3 with its substrates, OXSR1/OSR1 and STK39/SPAK, promoting WNK3-dependent phosphorylation and activation of downstream kinases OXSR1/OSR1 and STK39/SPAK. Following activation, OXSR1/OSR1 and STK39/SPAK catalyze phosphorylation of ion cotransporters SLC12A1/NKCC2, SLC12A2/NKCC1, SLC12A3/NCC, SLC12A4/KCC1, SLC12A5/KCC2 or SLC12A6/KCC3, regulating their activity. Phosphorylation of Na-K-Cl cotransporters SLC12A2/NKCC1 and SLC12A2/NKCC1 promote their activation and ion influx; simultaneously, phosphorylation of K-Cl cotransporters SLC12A4/KCC1, SLC12A5/KCC2 and SLC12A6/KCC3 inhibits its activity, blocking ion efflux. Phosphorylates WNK4, possibly regulating the activity of SLC12A3/NCC. May also phosphorylate NEDD4L. Also acts as a scaffold protein independently of its protein kinase activity: negatively regulates cell membrane localization of various transporters and channels, such as KCNJ1 and SLC26A9. Increases Ca(2+) influx mediated by TRPV5 and TRPV6 by enhancing their membrane expression level via a kinase-dependent pathway. In Mus musculus (Mouse), this protein is Serine/threonine-protein kinase WNK3.